A 1685-amino-acid chain; its full sequence is Phosphatidylinositol 4-phosphate 3-kinase C2 domain-containing subunit alpha (1685 aa).

2 disordered regions span residues 1-33 (MAQI…EALQ) and 41-60 (KLQK…LSSS). Ala-2 bears the N-acetylalanine mark. Positions 2-142 (AQISSNSGFK…FRPTIQRGQW (141 aa)) are interaction with clathrin; sufficient to induce clathrin assembly. Positions 19–31 (EPTRAKDVDKEEA) are enriched in basic and acidic residues. Positions 49-60 (TDNQRGFELSSS) are enriched in polar residues. A phosphoserine mark is found at Ser-60, Ser-108, Ser-259, Ser-327, and Ser-338. The region spanning 419–507 (NASVKVSIDI…DTEIRLQLLT (89 aa)) is the PI3K-RBD domain. Ser-628 bears the Phosphoserine mark. Positions 680 to 839 (TTEQLQFTIF…ERIVLQVDFP (160 aa)) constitute a C2 PI3K-type domain. The region spanning 859–1035 (QHNLETLEND…EHVLGALLSV (177 aa)) is the PIK helical domain. In terms of domain architecture, PI3K/PI4K catalytic spans 1103 to 1381 (SIKSCSFFSS…LIESSLGSIA (279 aa)). Positions 1109-1115 (FFSSNAV) are G-loop. The segment at 1245 to 1253 (GICDRHNDN) is catalytic loop. An activation loop region spans residues 1264 to 1290 (HIDFGKFLGHAQMFGTFKRDRAPFVLT). Positions 1420-1536 (GRIKEVSVFT…TFFHPLLRDE (117 aa)) constitute a PX domain. The interval 1486–1491 (RMVLGR) is interaction with PtdIns(4,5)P2-containing membranes. At Ser-1551 the chain carries Phosphoserine. The C2 domain maps to 1554–1677 (TPGQIGGAVK…NLSKETVKWY (124 aa)). Residues 1607 to 1618 (SKRKTKISRKTR) carry the Nuclear localization signal motif.

The protein belongs to the PI3/PI4-kinase family. As to quaternary structure, part of a complex with ERBB2 and EGFR. Interacts with clathrin trimers. Interacts with SBF2/MTMR13. Requires Ca(2+) as cofactor. Mg(2+) is required as a cofactor. In terms of processing, phosphorylated on Ser-259 during mitosis and upon UV irradiation; which does not change enzymatic activity but leads to proteasomal degradation. Phosphorylated upon insulin stimulation; which may lead to enzyme activation.

It is found in the cell membrane. It localises to the cytoplasmic vesicle. Its subcellular location is the clathrin-coated vesicle. The protein localises to the nucleus. The protein resides in the cytoplasm. It is found in the golgi apparatus. It localises to the trans-Golgi network. It carries out the reaction a 1,2-diacyl-sn-glycero-3-phospho-(1D-myo-inositol 4-phosphate) + ATP = a 1,2-diacyl-sn-glycero-3-phospho-(1D-myo-inositol-3,4-bisphosphate) + ADP + H(+). The enzyme catalyses a 1,2-diacyl-sn-glycero-3-phospho-(1D-myo-inositol) + ATP = a 1,2-diacyl-sn-glycero-3-phospho-(1D-myo-inositol-3-phosphate) + ADP + H(+). The catalysed reaction is a 1,2-diacyl-sn-glycero-3-phospho-(1D-myo-inositol-4,5-bisphosphate) + ATP = a 1,2-diacyl-sn-glycero-3-phospho-(1D-myo-inositol-3,4,5-trisphosphate) + ADP + H(+). Only slightly inhibited by wortmannin and LY294002. Activated by clathrin and insulin. Generates phosphatidylinositol 3-phosphate (PtdIns3P) and phosphatidylinositol 3,4-bisphosphate (PtdIns(3,4)P2) that act as second messengers. Has a role in several intracellular trafficking events. Functions in insulin signaling and secretion. Required for translocation of the glucose transporter SLC2A4/GLUT4 to the plasma membrane and glucose uptake in response to insulin-mediated RHOQ activation. Regulates insulin secretion through two different mechanisms: involved in glucose-induced insulin secretion downstream of insulin receptor in a pathway that involves AKT1 activation and TBC1D4/AS160 phosphorylation, and participates in the late step of insulin granule exocytosis probably in insulin granule fusion. Synthesizes PtdIns3P in response to insulin signaling. Functions in clathrin-coated endocytic vesicle formation and distribution. Regulates dynamin-independent endocytosis, probably by recruiting EEA1 to internalizing vesicles. In neurosecretory cells synthesizes PtdIns3P on large dense core vesicles. Participates in calcium induced contraction of vascular smooth muscle by regulating myosin light chain (MLC) phosphorylation through a mechanism involving Rho kinase-dependent phosphorylation of the MLCP-regulatory subunit MYPT1. May play a role in the EGF signaling cascade. May be involved in mitosis and UV-induced damage response. Required for maintenance of normal renal structure and function by supporting normal podocyte function. Involved in the regulation of ciliogenesis and trafficking of ciliary components. In Pongo abelii (Sumatran orangutan), this protein is Phosphatidylinositol 4-phosphate 3-kinase C2 domain-containing subunit alpha (PIK3C2A).